The sequence spans 190 residues: Ribosome maturation factor RimM (190 aa).

The PRC barrel domain maps to 102–190 (EDEYYWIDLV…RIDSDWPLED (89 aa)).

The protein belongs to the RimM family. In terms of assembly, binds ribosomal protein uS19.

The protein localises to the cytoplasm. Its function is as follows. An accessory protein needed during the final step in the assembly of 30S ribosomal subunit, possibly for assembly of the head region. Essential for efficient processing of 16S rRNA. May be needed both before and after RbfA during the maturation of 16S rRNA. It has affinity for free ribosomal 30S subunits but not for 70S ribosomes. The chain is Ribosome maturation factor RimM from Bordetella avium (strain 197N).